A 275-amino-acid chain; its full sequence is Reticulon-like protein B1 (275 aa).

Basic and acidic residues-rich tracts occupy residues 1–10 (MAEEHKHDES) and 20–38 (VVER…HHGG). A disordered region spans residues 1-68 (MAEEHKHDES…PSSPSSSMKS (68 aa)). Position 2 is an N-acetylalanine (alanine 2). Over residues 59–68 (PSSPSSSMKS) the composition is skewed to low complexity. The 186-residue stretch at 89 to 274 (PADIFMWKNK…PLGPLKNKKK (186 aa)) folds into the Reticulon domain. Transmembrane regions (helical) follow at residues 99–119 (KMSG…ELME), 120–140 (YHLL…LFLW), and 194–214 (FLIA…FNFL).

Interacts with VirB2. Predominantly expressed in root tissues.

The protein resides in the endoplasmic reticulum membrane. It is found in the cell membrane. In terms of biological role, plays a role in the Agrobacterium-mediated plant transformation via its interaction with VirB2, the major component of the T-pilus. The chain is Reticulon-like protein B1 (RTNLB1) from Arabidopsis thaliana (Mouse-ear cress).